The following is a 77-amino-acid chain: Acyl carrier protein (77 aa).

The 76-residue stretch at 2–77 folds into the Carrier domain; it reads ADVMERVTKI…DVVDYINNNQ (76 aa). Ser37 carries the post-translational modification O-(pantetheine 4'-phosphoryl)serine.

The protein belongs to the acyl carrier protein (ACP) family. In terms of processing, 4'-phosphopantetheine is transferred from CoA to a specific serine of apo-ACP by AcpS. This modification is essential for activity because fatty acids are bound in thioester linkage to the sulfhydryl of the prosthetic group.

The protein resides in the cytoplasm. It participates in lipid metabolism; fatty acid biosynthesis. Functionally, carrier of the growing fatty acid chain in fatty acid biosynthesis. In Shouchella clausii (strain KSM-K16) (Alkalihalobacillus clausii), this protein is Acyl carrier protein.